The following is a 281-amino-acid chain: Probable short-chain type dehydrogenase/reductase blr2146 (281 aa).

NAD(+) is bound at residue 10–34 (VVTGAGAGIGKACALAIAREGGRVV). Position 146 (S146) interacts with substrate. The Proton acceptor role is filled by Y159. A disordered region spans residues 261–281 (GNSRAARPAGETAEADAAPRC).

This sequence belongs to the short-chain dehydrogenases/reductases (SDR) family.

In Bradyrhizobium diazoefficiens (strain JCM 10833 / BCRC 13528 / IAM 13628 / NBRC 14792 / USDA 110), this protein is Probable short-chain type dehydrogenase/reductase blr2146.